The sequence spans 185 residues: Elongation factor P 1 (185 aa).

Belongs to the elongation factor P family.

It is found in the cytoplasm. It functions in the pathway protein biosynthesis; polypeptide chain elongation. Functionally, involved in peptide bond synthesis. Stimulates efficient translation and peptide-bond synthesis on native or reconstituted 70S ribosomes in vitro. Probably functions indirectly by altering the affinity of the ribosome for aminoacyl-tRNA, thus increasing their reactivity as acceptors for peptidyl transferase. The polypeptide is Elongation factor P 1 (efp1) (Chlamydia pneumoniae (Chlamydophila pneumoniae)).